The primary structure comprises 1661 residues: MEAPAAEPPVRGCGPQPAPAPAPAPERKKSHRAPSPARPKDVAGWSLAKGRRGPGPGSAVACSAAFSSRPDKKGRAVAPGARGAGVRVAGVRTGVRAKGRPRSGAGPRPPPPPPSLTDSSSEVSDCASEEARLLGLELALSSDAESAAGGPAGVRTGQPAQPAPSAQQPPRPPASPDEPSVAASSVGSSRLPLSASLAFSDLTEEMLDCGPSGLVRELEELRSENDYLKDEIEELRAEMLEMRDVYMEEDVYQLQELRQQLDQASKTCRILQYRLRKAERRSLRAAQTGQVDGELIRGLEQDVKVSKDISMRLHKELEVVEKKRARLEEENEELRQRLIETELAKQVLQTELERPREHSLKKRGTRSLGKADKKTLVQEDSADLKCQLHFAKEESALMCKKLTKLAKENDSMKEELLKYRSLYGDLDSALSAEELADAPHSRETELKVHLKLVEEEANLLSRRIVELEVENRGLRAEMDDMKDHGGGCGGPEARLAFSALGGGECGESLAELRRHLQFVEEEAELLRRSSAELEDQNKLLLNELAKFRSEHELDVALSEDSCSVLSEPSQEELAAAKLQIGELSGKVKKLQYENRVLLSNLQRCDLASCQSTRPMLETDAEAGDSAQCVPAPLGETHESHAVRLCRAREAEVLPGLREQAALVSKAIDVLVADANGFTAGLRLCLDNECADFRLHEAPDNSEGPRDTKLIHAILVRLSVLQQELNAFTRKADAVLGCSVKEQQESFSSLPPLGSQGLSKEILLAKDLGSDFQPPDFRDLPEWEPRIREAFRTGDLDSKPDPSRSFRPYRAEDNDSYASEIKELQLVLAEAHDSLRGLQEQLSQERQLRKEEADNFNQKMVQLKEDQQRALLRREFELQSLSLQRRLEQKFWSQEKNMLVQESQQFKHNFLLLFMKLRWFLKRWRQGKVLPSEGDDFLEVNSMKELYLLMEEEEINAQHSDNKACTGDSWTQNTPNEYIKTLADMKVTLKELCWLLRDERRGLTELQQQFAKAKATWETERAELKGHTSQMELKTGKGAGERAGPDWKAALQREREEQQHLLAESYSAVMELTRQLQISERNWSQEKLQLVERLQGEKQQVEQQVKELQNRLSQLQKAADPWVLKHSELEKQDNSWKETRSEKIHDKEAVSEVELGGNGLKRTKSVSSMSEFESLLDCSPYLAGGDARGKKLPNNPAFGFVSSEPGDPEKDTKEKPGLSSRDCNHLGALACQDPPGRQMQRSYTAPDKTGIRVYYSPPVARRLGVPVVHDKEGKIIIEPGFLFTTAKPKESAEADGLAESSYGRWLCNFSRQRLDGGSAGSPSAAGPGFPAALHDFEMSGNMSDDMKEITNCVRQAMRSGSLERKVKSTSSQTVGLASVGTQTIRTVSVGLQTDPPRSSLHGKAWSPRSSSLVSVRSKQISSSLDKVHSRIERPCCSPKYGSPKLQRRSVSKLDSSKDRSLWNLHQGKQNGSAWARSTTTRDSPVLRNINDGLSSLFSVVEHSGSTESVWKLGMSETRAKPEPPKYGIVQEFFRNVCGRAPSPTSSAGEEGTKKPEPLSPASYHQPEGVARILNKKAAKLGSSEEVRLTMLPQVGKDGVLRDGDGAVVLPNEDAVCDCSTQSLTSCFARSSRSAIRHSPSKCRLHPSESSWGGEERALPPSE.

The segment at 1-187 (MEAPAAEPPV…EPSVAASSVG (187 aa)) is disordered. 2 stretches are compositionally biased toward low complexity: residues 76-94 (AVAPGARGAGVRVAGVRTG) and 133-149 (LLGLELALSSDAESAAG). The segment covering 167–176 (QQPPRPPASP) has biased composition (pro residues). The segment at 211 to 240 (PSGLVRELEELRSENDYLKDEIEELRAEML) is required for association with Golgi apparatus membrane. Coiled coils occupy residues 218–281 (LEEL…AERR) and 310–351 (SMRL…LQTE). Residues 353 to 373 (ERPREHSLKKRGTRSLGKADK) form a disordered region. Coiled-coil stretches lie at residues 450 to 484 (LKLVEEEANLLSRRIVELEVENRGLRAEMDDMKDH), 820 to 865 (IKEL…LKED), and 1083 to 1117 (SQEKLQLVERLQGEKQQVEQQVKELQNRLSQLQKA). The residue at position 1169 (serine 1169) is a Phosphoserine. A disordered region spans residues 1196-1221 (AFGFVSSEPGDPEKDTKEKPGLSSRD). Basic and acidic residues predominate over residues 1206 to 1215 (DPEKDTKEKP). Position 1255 is a phosphoserine (serine 1255). Disordered regions lie at residues 1432 to 1456 (RPCCSPKYGSPKLQRRSVSKLDSSK), 1538 to 1563 (RAPSPTSSAGEEGTKKPEPLSPASYH), and 1636 to 1661 (HSPSKCRLHPSESSWGGEERALPPSE). Positions 1652–1661 (GEERALPPSE) are enriched in basic and acidic residues.

The protein belongs to the MTCL family. Interacts with CLASP1 and CLASP2. The C-terminal 25 kDa form occurs as a monomer. Proteolytically cleaved in primary hepatocytes into a C-terminal 80 kDa form. Proteolytically cleaved into a C-terminal SOGA 25 kDa form that is detected in plasma. In terms of processing, phosphorylated during mitosis in a CDK1-dependent manner.

The protein resides in the cytoplasm. The protein localises to the cytoskeleton. It is found in the golgi apparatus membrane. Its subcellular location is the midbody. It localises to the secreted. Microtubule-associated factor that enables integration of the centrosomal and Golgi-associated microtubules on the Golgi membrane, supporting directional migration. Preferentially acts on the perinuclear microtubules accumulated around the Golgi. Associates with the Golgi membrane through the N-terminal coiled-coil region and directly binds microtubules through the C-terminal domain. Required for faithful chromosome segregation during mitosis. Regulates autophagy by playing a role in the reduction of glucose production in an adiponectin- and insulin-dependent manner. In Homo sapiens (Human), this protein is Microtubule cross-linking factor 2.